The chain runs to 105 residues: Small ribosomal subunit protein uS10 (105 aa).

The protein belongs to the universal ribosomal protein uS10 family. Part of the 30S ribosomal subunit.

Involved in the binding of tRNA to the ribosomes. In Chlamydia muridarum (strain MoPn / Nigg), this protein is Small ribosomal subunit protein uS10.